The sequence spans 493 residues: MTTVRTRIAPSPTGDPHVGTAYIALFNYCFAKQHGGEFILRIEDTDQLRSTRESEQQIFDALRWLGIEWNEGPDVGGPHGPYRQSERGEIYAKYAKELVDAGHAFYCFCTAEELEQMRAEQQARGETPRYDGRALLMSAEEVQRRLDAGEPHVIRMKVPSEGICVVPDMLRGDVEIPWDRMDMQVLMKNDGLPTYFLANVVDDHLMGITHVLRGEEWLPSAPKLIKLYEYFGWEQPKLCYMPLLRNPDKSKLSKRKNPTSVTFYERMGFMPEAMLNYLGRMGWSMPDEREKFSLAEMVEHFDLSRISLGGPIFDIEKLSWLNGQWLRELPVEEFAARLQKWAFNSDYMMKIAPHVQGRVETFSQVAPLGGFFFEGALKLDAKLFESKKLSADQVRQVIQLILWKLESLRQWEKERITGCIQAVVEALELKLRDAMPLMFAAITGQASSVSVLDAMEILGPDLTRYRLRQALDLLGGVSKKENKEWEKLLASIA.

The 'HIGH' region signature appears at 10 to 20 (PSPTGDPHVGT). The 'KMSKS' region motif lies at 251–255 (KLSKR). Lysine 254 provides a ligand contact to ATP.

The protein belongs to the class-I aminoacyl-tRNA synthetase family. Glutamate--tRNA ligase type 1 subfamily. In terms of assembly, monomer.

It is found in the cytoplasm. It carries out the reaction tRNA(Glu) + L-glutamate + ATP = L-glutamyl-tRNA(Glu) + AMP + diphosphate. Catalyzes the attachment of glutamate to tRNA(Glu) in a two-step reaction: glutamate is first activated by ATP to form Glu-AMP and then transferred to the acceptor end of tRNA(Glu). The protein is Glutamate--tRNA ligase of Pseudomonas putida (strain ATCC 47054 / DSM 6125 / CFBP 8728 / NCIMB 11950 / KT2440).